Consider the following 226-residue polypeptide: ATP synthase F(0) complex subunit a (226 aa).

6 helical membrane-spanning segments follow: residues 5–25, 68–88, 97–117, 138–158, 160–180, and 189–209; these read LFAS…LIIL, WSLM…LGLL, QLSM…TTGF, IPML…ALAV, LTAN…ATLA, and TLII…VALI.

It belongs to the ATPase A chain family. As to quaternary structure, component of the ATP synthase complex composed at least of ATP5F1A/subunit alpha, ATP5F1B/subunit beta, ATP5MC1/subunit c (homooctomer), MT-ATP6/subunit a, MT-ATP8/subunit 8, ATP5ME/subunit e, ATP5MF/subunit f, ATP5MG/subunit g, ATP5MK/subunit k, ATP5MJ/subunit j, ATP5F1C/subunit gamma, ATP5F1D/subunit delta, ATP5F1E/subunit epsilon, ATP5PF/subunit F6, ATP5PB/subunit b, ATP5PD/subunit d, ATP5PO/subunit OSCP. ATP synthase complex consists of a soluble F(1) head domain (subunits alpha(3) and beta(3)) - the catalytic core - and a membrane F(0) domain - the membrane proton channel (subunits c, a, 8, e, f, g, k and j). These two domains are linked by a central stalk (subunits gamma, delta, and epsilon) rotating inside the F1 region and a stationary peripheral stalk (subunits F6, b, d, and OSCP). Interacts with DNAJC30; interaction is direct.

The protein localises to the mitochondrion inner membrane. The enzyme catalyses H(+)(in) = H(+)(out). Subunit a, of the mitochondrial membrane ATP synthase complex (F(1)F(0) ATP synthase or Complex V) that produces ATP from ADP in the presence of a proton gradient across the membrane which is generated by electron transport complexes of the respiratory chain. ATP synthase complex consist of a soluble F(1) head domain - the catalytic core - and a membrane F(1) domain - the membrane proton channel. These two domains are linked by a central stalk rotating inside the F(1) region and a stationary peripheral stalk. During catalysis, ATP synthesis in the catalytic domain of F(1) is coupled via a rotary mechanism of the central stalk subunits to proton translocation. With the subunit c (ATP5MC1), forms the proton-conducting channel in the F(0) domain, that contains two crucial half-channels (inlet and outlet) that facilitate proton movement from the mitochondrial intermembrane space (IMS) into the matrix. Protons are taken up via the inlet half-channel and released through the outlet half-channel, following a Grotthuss mechanism. This is ATP synthase F(0) complex subunit a from Gorilla gorilla gorilla (Western lowland gorilla).